The sequence spans 598 residues: Vacuolin-A (598 aa).

A coiled-coil region spans residues 482 to 539 (IKTTEARLKAETDNIALEQRNKAIISESQAKLSSAQREAESLLITAEAQKKASELQGE).

The protein belongs to the vacuolin family.

The protein resides in the endosome membrane. It is found in the lysosome. This is Vacuolin-A (vacA) from Dictyostelium discoideum (Social amoeba).